Here is a 1120-residue protein sequence, read N- to C-terminus: Cluster 41 polyketide synthase (1120 aa).

Residues 7-430 (PHDVAVVGMG…GTVSHAIIEK (424 aa)) form the Ketosynthase family 3 (KS3) domain. Catalysis depends on for beta-ketoacyl synthase activity residues C178, H313, and H353. The interval 539–796 (VWVFSGHGAQ…TSAISAAAED (258 aa)) is malonyl-CoA:ACP transacylase (MAT) domain. The active-site For acyl/malonyl transferase activity is the S625. Residues 804–943 (IKKILSMESR…IAMQWTSWRE (140 aa)) form a ketoreductase (KR) domain region. Positions 1042–1116 (DSLSRQVREC…HIVKWLMEKT (75 aa)) constitute a Carrier domain. S1076 carries the O-(pantetheine 4'-phosphoryl)serine modification.

Its function is as follows. Polyketide synthase; part of the gene cluster 41 that mediates the biosynthesis of an extracellular and diffusible metabolite that is able to stimulate colony sclerotial production. This Aspergillus flavus (strain ATCC 200026 / FGSC A1120 / IAM 13836 / NRRL 3357 / JCM 12722 / SRRC 167) protein is Cluster 41 polyketide synthase.